Here is a 37-residue protein sequence, read N- to C-terminus: MAETAEDLAEKKKKRTFRKFTYRGVDLDQLLDMNMDQ.

This sequence belongs to the universal ribosomal protein uS19 family.

The chain is Small ribosomal subunit protein uS19 (RPS15) from Helix lucorum (Snail).